The primary structure comprises 371 residues: 4-hydroxy-3-methylbut-2-en-1-yl diphosphate synthase (flavodoxin) (371 aa).

Cys-272, Cys-275, Cys-307, and Glu-314 together coordinate [4Fe-4S] cluster.

It belongs to the IspG family. It depends on [4Fe-4S] cluster as a cofactor.

It catalyses the reaction (2E)-4-hydroxy-3-methylbut-2-enyl diphosphate + oxidized [flavodoxin] + H2O + 2 H(+) = 2-C-methyl-D-erythritol 2,4-cyclic diphosphate + reduced [flavodoxin]. It functions in the pathway isoprenoid biosynthesis; isopentenyl diphosphate biosynthesis via DXP pathway; isopentenyl diphosphate from 1-deoxy-D-xylulose 5-phosphate: step 5/6. Its function is as follows. Converts 2C-methyl-D-erythritol 2,4-cyclodiphosphate (ME-2,4cPP) into 1-hydroxy-2-methyl-2-(E)-butenyl 4-diphosphate. The sequence is that of 4-hydroxy-3-methylbut-2-en-1-yl diphosphate synthase (flavodoxin) from Magnetococcus marinus (strain ATCC BAA-1437 / JCM 17883 / MC-1).